We begin with the raw amino-acid sequence, 924 residues long: Exocyst complex component 2 (924 aa).

The IPT/TIG domain occupies 8–93 (PLVTGISPNE…GTSTVSFKLL (86 aa)). Residues 240–260 (QKLENVLNRASNTADTLFQEV) adopt a coiled-coil conformation. Phosphoserine occurs at positions 431, 432, and 435. At Thr-440 the chain carries Phosphothreonine. Position 454 is an N6-acetyllysine (Lys-454). At Ser-888 the chain carries Phosphoserine.

The protein belongs to the SEC5 family. In terms of assembly, the exocyst complex is composed of EXOC1, EXOC2, EXOC3, EXOC4, EXOC5, EXOC6, EXOC7 and EXOC8. Interacts with EXOC3L1. Interacts with GNEFR/DELGEF; this interaction occurs only in the presence of magnesium or manganese and is stimulated by dCTP or GTP. Interacts with RALA and RALB. Interacts with ARL13B; regulates ARL13B localization to the cilium membrane. Widely expressed with highest levels in brain and placenta.

The protein localises to the midbody. Its subcellular location is the midbody ring. Functionally, component of the exocyst complex involved in the docking of exocytic vesicles with fusion sites on the plasma membrane. The protein is Exocyst complex component 2 (EXOC2) of Homo sapiens (Human).